Consider the following 999-residue polypeptide: Nonsense-mediated mRNA decay factor SMG8 (999 aa).

3 disordered regions span residues 15 to 42, 83 to 136, and 287 to 307; these read SAWTSSESPEGSPTEGGGSAAGGPEPPW, QDPG…GNRT, and PPRNQDPAHPDKPKKHSPKRR. The segment covering 18–27 has biased composition (low complexity); sequence TSSESPEGSP. Over residues 100-120 the composition is skewed to gly residues; the sequence is GEAGGAGDPGAGAGAGAGAGA. The span at 287-297 shows a compositional bias: basic and acidic residues; that stretch reads PPRNQDPAHPD. The segment covering 298-307 has biased composition (basic residues); the sequence is KPKKHSPKRR. Phosphoserine is present on residues serine 477 and serine 676. The interval 661–734 is disordered; it reads FEPSTPDPAP…GDNPEVHGQG (74 aa). Residues 683 to 692 are compositionally biased toward basic and acidic residues; that stretch reads DADKLKEKEP. The span at 693-714 shows a compositional bias: polar residues; that stretch reads QTQGESTSLSLALSLGQSTDSL. 2 positions are modified to phosphoserine: serine 750 and serine 903. Residue arginine 906 is modified to Omega-N-methylarginine.

The protein belongs to the SMG8 family. In terms of assembly, component of the SMG1C complex composed of SMG1, SMG8 and SMG9; the recruitment of SMG8 to SMG1 N-terminus induces a large conformational change in the SMG1 C-terminal head domain containing the catalytic domain. Forms heterodimers with SMG9; this assembly form may represent a SMG1C intermediate form. Post-translationally, phosphorylated by SMG1.

Involved in nonsense-mediated decay (NMD) of mRNAs containing premature stop codons. Is recruited by release factors to stalled ribosomes together with SMG1 and SMG9 (forming the SMG1C protein kinase complex) and, in the SMG1C complex, is required to mediate the recruitment of SMG1 to the ribosome:SURF complex and to suppress SMG1 kinase activity until the ribosome:SURF complex locates the exon junction complex (EJC). Acts as a regulator of kinase activity. The chain is Nonsense-mediated mRNA decay factor SMG8 (SMG8) from Bos taurus (Bovine).